The sequence spans 365 residues: Cobalt-precorrin-5B C(1)-methyltransferase (365 aa).

Belongs to the CbiD family.

The enzyme catalyses Co-precorrin-5B + S-adenosyl-L-methionine = Co-precorrin-6A + S-adenosyl-L-homocysteine. It functions in the pathway cofactor biosynthesis; adenosylcobalamin biosynthesis; cob(II)yrinate a,c-diamide from sirohydrochlorin (anaerobic route): step 6/10. Its function is as follows. Catalyzes the methylation of C-1 in cobalt-precorrin-5B to form cobalt-precorrin-6A. This Pseudomonas fluorescens (strain ATCC BAA-477 / NRRL B-23932 / Pf-5) protein is Cobalt-precorrin-5B C(1)-methyltransferase.